The primary structure comprises 585 residues: Zinc finger protein 496 (585 aa).

Positions 1 to 41 are disordered; that stretch reads MPTALCPRVLAPKESEEPRKMRSPPGENPSPQGEPPSPESS. The span at 11–20 shows a compositional bias: basic and acidic residues; the sequence is APKESEEPRK. Residue Lys-13 forms a Glycyl lysine isopeptide (Lys-Gly) (interchain with G-Cter in SUMO2) linkage. The segment covering 26–38 has biased composition (pro residues); the sequence is GENPSPQGEPPSP. Residues 42-124 form the SCAN box domain; the sequence is RRLFRRFRYQ…AAVEALEREP (83 aa). The disordered stretch occupies residues 141–167; the sequence is DDGDGPAAPQDLEQERMSAESQSYPDA. Phosphoserine is present on Ser-182. Residues 220–294 form the KRAB domain; sequence SPFKDMILCF…DLQDKEIPQA (75 aa). The interval 358–397 is disordered; sequence SSSGDEDSQHSPYCTEELRSPPEDLHSVPAHQSNASAEGE. Over residues 373–383 the composition is skewed to basic and acidic residues; that stretch reads EELRSPPEDLH. Polar residues predominate over residues 387-397; sequence AHQSNASAEGE. The segment at 405–427 adopts a C2H2-type 1; degenerate zinc-finger fold; it reads YVCPNCGKIFRWRVNFIRHLRSR. C2H2-type zinc fingers lie at residues 433–455 and 461–483; these read HKCS…LETH and YRCT…RRIH. The segment at 483–506 is disordered; the sequence is HLQPASQQPMKKSEEEALETEGTG. Lys-494 participates in a covalent cross-link: Glycyl lysine isopeptide (Lys-Gly) (interchain with G-Cter in SUMO2). C2H2-type zinc fingers lie at residues 520 to 543 and 551 to 573; these read FQCG…RHCH and FQCR…ERLH. The Nuclear localization signal signature appears at 575–579; the sequence is KRRSK.

This sequence belongs to the krueppel C2H2-type zinc-finger protein family. As to quaternary structure, interacts (via zinc-fingers) with JARID2. Interacts with NSD1.

The protein resides in the nucleus. In terms of biological role, DNA-binding transcription factor that can both act as an activator and a repressor. The polypeptide is Zinc finger protein 496 (Znf496) (Mus musculus (Mouse)).